A 309-amino-acid chain; its full sequence is Enoyl-CoA hydratase 2, peroxisomal (309 aa).

Substrate is bound by residues His95–Gly96, Lys124, Asp208–His213, Gly231, and Phe261. Positions Pro183 to Val295 constitute a MaoC-like domain. A Microbody targeting signal motif is present at residues Ser307 to Leu309.

In terms of tissue distribution, ubiquitous.

The protein resides in the peroxisome. The enzyme catalyses a (3R)-3-hydroxyacyl-CoA = a (2E)-enoyl-CoA + H2O. It functions in the pathway lipid metabolism; fatty acid beta-oxidation. Functionally, bidirectional monofunctional enoyl-CoA hydratase 2 involved in the degradation of even cis-unsaturated fatty acids. Devoid of 3-hydroxyacyl-CoA dehydrogenase activity. The sequence is that of Enoyl-CoA hydratase 2, peroxisomal (ECH2) from Arabidopsis thaliana (Mouse-ear cress).